Reading from the N-terminus, the 203-residue chain is SCO2-like protein RT0576 (203 aa).

Positions 42-203 (KDNIKIGEAF…KEIMEFLRNE (162 aa)) constitute a Thioredoxin domain. Cu cation is bound by residues cysteine 80, cysteine 84, and histidine 170.

Belongs to the SCO1/2 family.

The polypeptide is SCO2-like protein RT0576 (Rickettsia typhi (strain ATCC VR-144 / Wilmington)).